The chain runs to 67 residues: Brevinin-1CDYc (67 aa).

Residues 1 to 22 (MFTLKKSLLLIFFLGTINLSLC) form the signal peptide. Residues 23–45 (EEERNADEEERRDDPEERDVEVE) constitute a propeptide that is removed on maturation. Cysteine 61 and cysteine 67 are disulfide-bonded.

Belongs to the frog skin active peptide (FSAP) family. Brevinin subfamily. As to expression, expressed by the skin glands.

The protein resides in the secreted. Antimicrobial peptide. This Rana huanrensis (Huanren frog) protein is Brevinin-1CDYc.